The primary structure comprises 445 residues: Transmembrane protein 184C (445 aa).

Helical transmembrane passes span 15–35, 46–66, 84–104, 177–197, 210–230, 252–272, and 285–305; these read LVVL…VWEL, AWFI…WGIL, ILWM…YPNI, YTVV…VGVY, YLVI…VLFY, VVFV…VGVI, and AVAT…AAIA. 2 disordered regions span residues 369–393 and 421–445; these read EHTS…SSPM and TSAT…LDRS. Polar residues predominate over residues 370–390; it reads HTSLLSSSTQDPISDASSMPS.

The protein belongs to the TMEM184 family.

The protein resides in the membrane. Its function is as follows. May play a role in cell growth. In Gallus gallus (Chicken), this protein is Transmembrane protein 184C (TMEM184C).